The chain runs to 296 residues: Lipoyl synthase (296 aa).

Cysteine 34, cysteine 39, cysteine 45, cysteine 60, cysteine 64, cysteine 67, and serine 276 together coordinate [4Fe-4S] cluster. A Radical SAM core domain is found at 46 to 265; that stretch reads WGEGTATFMI…GEVALSMGFK (220 aa).

This sequence belongs to the radical SAM superfamily. Lipoyl synthase family. The cofactor is [4Fe-4S] cluster.

It is found in the cytoplasm. The catalysed reaction is [[Fe-S] cluster scaffold protein carrying a second [4Fe-4S](2+) cluster] + N(6)-octanoyl-L-lysyl-[protein] + 2 oxidized [2Fe-2S]-[ferredoxin] + 2 S-adenosyl-L-methionine + 4 H(+) = [[Fe-S] cluster scaffold protein] + N(6)-[(R)-dihydrolipoyl]-L-lysyl-[protein] + 4 Fe(3+) + 2 hydrogen sulfide + 2 5'-deoxyadenosine + 2 L-methionine + 2 reduced [2Fe-2S]-[ferredoxin]. Its pathway is protein modification; protein lipoylation via endogenous pathway; protein N(6)-(lipoyl)lysine from octanoyl-[acyl-carrier-protein]: step 2/2. Functionally, catalyzes the radical-mediated insertion of two sulfur atoms into the C-6 and C-8 positions of the octanoyl moiety bound to the lipoyl domains of lipoate-dependent enzymes, thereby converting the octanoylated domains into lipoylated derivatives. The chain is Lipoyl synthase from Pyrobaculum arsenaticum (strain DSM 13514 / JCM 11321 / PZ6).